The primary structure comprises 191 residues: Dirigent protein 3 (191 aa).

Positions 1 to 21 (MSKLILILTAQILLLTATALA) are cleaved as a signal peptide. N-linked (GlcNAc...) asparagine glycosylation is found at Asn-96 and Asn-131.

This sequence belongs to the plant dirigent protein family. In terms of assembly, homodimer.

The protein resides in the secreted. It is found in the extracellular space. It localises to the apoplast. Functionally, dirigent proteins impart stereoselectivity on the phenoxy radical-coupling reaction, yielding optically active lignans from two molecules of coniferyl alcohol in the biosynthesis of lignans, flavonolignans, and alkaloids and thus plays a central role in plant secondary metabolism. The protein is Dirigent protein 3 (DIR3) of Arabidopsis thaliana (Mouse-ear cress).